The following is a 215-amino-acid chain: Cytochrome b6 (215 aa).

The helical transmembrane segment at 32–52 threads the bilayer; it reads IFYCIGGITFTCFLVQVATGF. Position 35 (C35) interacts with heme c. Heme b contacts are provided by G37, R83, H86, H100, R103, and R114. A helical transmembrane segment spans residues 90 to 110; sequence ASMMVLMMVLHVFRVYLTGGF. The next 2 membrane-spanning stretches (helical) occupy residues 116-136 and 186-206; these read LTWVTGVIMAVCTVSFGVTGY and LHTFVLPLLTAVFMLMHFLMI. The heme b site is built by H187 and H202. Heme c contacts are provided by R207 and I211. S212 contacts heme b.

Belongs to the cytochrome b family. PetB subfamily. The 4 large subunits of the cytochrome b6-f complex are cytochrome b6, subunit IV (17 kDa polypeptide, PetD), cytochrome f and the Rieske protein, while the 4 small subunits are PetG, PetL, PetM and PetN. The complex functions as a dimer. It depends on heme b as a cofactor. Requires heme c as cofactor. Post-translationally, the N-terminus is blocked.

The protein localises to the plastid. Its subcellular location is the chloroplast thylakoid membrane. Its function is as follows. Component of the cytochrome b6-f complex, which mediates electron transfer between photosystem II (PSII) and photosystem I (PSI), cyclic electron flow around PSI, and state transitions. This chain is Cytochrome b6, found in Chlamydomonas reinhardtii (Chlamydomonas smithii).